The following is a 390-amino-acid chain: Heme chaperone HemW (390 aa).

Positions 15–254 constitute a Radical SAM core domain; the sequence is PMPGQPFGVY…DARLSAAGFA (240 aa). Residue Tyr-24 participates in S-adenosyl-L-methionine binding. 3 residues coordinate [4Fe-4S] cluster: Cys-30, Cys-34, and Cys-37. S-adenosyl-L-methionine is bound by residues Gly-82, 83 to 84, Glu-115, Gln-142, Arg-154, and Asp-179; that span reads GT.

The protein belongs to the anaerobic coproporphyrinogen-III oxidase family. HemW subfamily. It depends on [4Fe-4S] cluster as a cofactor.

The protein resides in the cytoplasm. Functionally, probably acts as a heme chaperone, transferring heme to an unknown acceptor. Binds one molecule of heme per monomer, possibly covalently. Binds 1 [4Fe-4S] cluster. The cluster is coordinated with 3 cysteines and an exchangeable S-adenosyl-L-methionine. This chain is Heme chaperone HemW, found in Mycobacterium tuberculosis (strain CDC 1551 / Oshkosh).